The chain runs to 490 residues: Aspartyl/glutamyl-tRNA(Asn/Gln) amidotransferase subunit B (490 aa).

It belongs to the GatB/GatE family. GatB subfamily. In terms of assembly, heterotrimer of A, B and C subunits.

The catalysed reaction is L-glutamyl-tRNA(Gln) + L-glutamine + ATP + H2O = L-glutaminyl-tRNA(Gln) + L-glutamate + ADP + phosphate + H(+). It carries out the reaction L-aspartyl-tRNA(Asn) + L-glutamine + ATP + H2O = L-asparaginyl-tRNA(Asn) + L-glutamate + ADP + phosphate + 2 H(+). In terms of biological role, allows the formation of correctly charged Asn-tRNA(Asn) or Gln-tRNA(Gln) through the transamidation of misacylated Asp-tRNA(Asn) or Glu-tRNA(Gln) in organisms which lack either or both of asparaginyl-tRNA or glutaminyl-tRNA synthetases. The reaction takes place in the presence of glutamine and ATP through an activated phospho-Asp-tRNA(Asn) or phospho-Glu-tRNA(Gln). The polypeptide is Aspartyl/glutamyl-tRNA(Asn/Gln) amidotransferase subunit B (Burkholderia ambifaria (strain MC40-6)).